A 146-amino-acid chain; its full sequence is Large ribosomal subunit protein uL15 (146 aa).

Over residues 1–13 (MKLHELKPAEGSR) the composition is skewed to basic and acidic residues. The disordered stretch occupies residues 1-57 (MKLHELKPAEGSRKVRNRVGRGTSSGNGKTSGRGQKGQKARSGVGLRPGFEGGQTPL). The span at 23–35 (TSSGNGKTSGRGQ) shows a compositional bias: gly residues.

It belongs to the universal ribosomal protein uL15 family. Part of the 50S ribosomal subunit.

Binds to the 23S rRNA. In Streptococcus thermophilus (strain CNRZ 1066), this protein is Large ribosomal subunit protein uL15.